Reading from the N-terminus, the 185-residue chain is MSKEVLSKSKEKMEKAEQALTRQLGTIRAGRANASLLDRLTVDYYGAATPVNQMASISVPEARMLLITPYDKTILGEIEKAILKSDLGLTPNNDGSVLRLSIPQLTEERRKELVKEVKKEAEEAKVAVRNIRREANEDLKKLEKNGDITEDDLRSYGEDVQKLTDESIKNIDSITKDKEAEILEV.

It belongs to the RRF family.

The protein localises to the cytoplasm. Responsible for the release of ribosomes from messenger RNA at the termination of protein biosynthesis. May increase the efficiency of translation by recycling ribosomes from one round of translation to another. This Listeria innocua serovar 6a (strain ATCC BAA-680 / CLIP 11262) protein is Ribosome-recycling factor.